A 186-amino-acid chain; its full sequence is METFSSKDLALQAQKKILSRMASKSMVNMFIDETSSEILDELYRVSKEYTKNKTESQKVIKNLIKIAVKIGVLFRHNRFSPEELVLAKDFKNRLHNGAMTAISFYEVEFTFEKDVLPEILMECKNLVLRLVEKHLTPKSHGRIQHVFNHFADPEMLSQLYDTKSSLRPHLQKICNGLNKLIEEEKL.

It belongs to the TNFAIP8 family. TNFAIP8L2 subfamily.

Its function is as follows. Acts as a negative regulator of innate and adaptive immunity by maintaining immune homeostasis. Negative regulator of Toll-like receptor and T-cell receptor function. Prevents hyperresponsiveness of the immune system and maintains immune homeostasis. Inhibits jun/ap1 and NF-kappa-B activation. Promotes Fas-induced apoptosis. This Xenopus laevis (African clawed frog) protein is Tumor necrosis factor alpha-induced protein 8-like protein 2 (tnfaip8l2).